A 443-amino-acid polypeptide reads, in one-letter code: Putative rhamnogalacturonase D (443 aa).

An N-terminal signal peptide occupies residues 1-16 (MLVTSLIALLPAIAAA). Cys37 and Cys63 are oxidised to a cystine. Asn47, Asn103, Asn124, and Asn152 each carry an N-linked (GlcNAc...) asparagine glycan. Asp215 acts as the Proton donor in catalysis. An intrachain disulfide couples Cys217 to Cys234. Asn235, Asn250, Asn263, Asn276, and Asn281 each carry an N-linked (GlcNAc...) asparagine glycan. A disulfide bridge links Cys338 with Cys344. Asn346 carries N-linked (GlcNAc...) asparagine glycosylation. Residues Cys366 and Cys375 are joined by a disulfide bond. An N-linked (GlcNAc...) asparagine glycan is attached at Asn380.

The protein belongs to the glycosyl hydrolase 28 family.

It is found in the secreted. Its function is as follows. Pectinolytic enzymes consist of four classes of enzymes: pectine lyase, polygalacturonase, pectin methylesterase and rhamnogalacturonase. Hydrolyzes alpha-D-galacturonopyranosyl-(1,2)-alpha-L-rhamnopyranosyl linkages in the backbone of the hairy regions of pectins. The polypeptide is Putative rhamnogalacturonase D (rhgD) (Aspergillus niger (strain ATCC MYA-4892 / CBS 513.88 / FGSC A1513)).